A 508-amino-acid chain; its full sequence is Photosystem II CP47 reaction center protein (508 aa).

6 helical membrane passes run 21 to 36, 101 to 115, 140 to 156, 203 to 218, 237 to 252, and 457 to 472; these read SVHI…WAGS, IVFS…IWHW, GIHL…FGAF, IAAG…FHLS, VLSS…AFVV, and SFAL…HGAR.

This sequence belongs to the PsbB/PsbC family. PsbB subfamily. In terms of assembly, PSII is composed of 1 copy each of membrane proteins PsbA, PsbB, PsbC, PsbD, PsbE, PsbF, PsbH, PsbI, PsbJ, PsbK, PsbL, PsbM, PsbT, PsbX, PsbY, PsbZ, Psb30/Ycf12, at least 3 peripheral proteins of the oxygen-evolving complex and a large number of cofactors. It forms dimeric complexes. Requires Binds multiple chlorophylls. PSII binds additional chlorophylls, carotenoids and specific lipids. as cofactor.

It is found in the plastid. Its subcellular location is the chloroplast thylakoid membrane. Functionally, one of the components of the core complex of photosystem II (PSII). It binds chlorophyll and helps catalyze the primary light-induced photochemical processes of PSII. PSII is a light-driven water:plastoquinone oxidoreductase, using light energy to abstract electrons from H(2)O, generating O(2) and a proton gradient subsequently used for ATP formation. This is Photosystem II CP47 reaction center protein from Nasturtium officinale (Watercress).